Consider the following 168-residue polypeptide: Disulfide bond formation protein B (168 aa).

Residues 1 to 6 lie on the Cytoplasmic side of the membrane; that stretch reads MTSRWI. Residues 7-23 form a helical membrane-spanning segment; sequence FGLVFLVCAGLLAVAFY. Residues 24 to 41 lie on the Periplasmic side of the membrane; that stretch reads MEHVMGLEPCPLCWLQRF. A disulfide bond links cysteine 33 and cysteine 36. Residues 42–58 traverse the membrane as a helical segment; it reads GFMGAGLVSLLAFLHGP. The Cytoplasmic segment spans residues 59–65; it reads RGFGNRV. A helical membrane pass occupies residues 66 to 82; sequence YGLLLIVAAGAGLAVAG. The Periplasmic portion of the chain corresponds to 83-139; the sequence is RQLWLQSLPADQVPACGPSVDYMLEVLPWFEVLQTALKGTGDCAEVVWRFLGLSIPG. Cysteine 98 and cysteine 125 are joined by a disulfide. A helical membrane pass occupies residues 140–158; that stretch reads WTAVFFSLLIVLGLFVMLR. The Cytoplasmic portion of the chain corresponds to 159–168; sequence RYSPRDWLQS.

Belongs to the DsbB family.

It localises to the cell inner membrane. Functionally, required for disulfide bond formation in some periplasmic proteins. Acts by oxidizing the DsbA protein. In Marinobacter nauticus (strain ATCC 700491 / DSM 11845 / VT8) (Marinobacter aquaeolei), this protein is Disulfide bond formation protein B.